The chain runs to 471 residues: ATP synthase subunit beta (471 aa).

An ATP-binding site is contributed by 153–160; sequence GGAGVGKT.

Belongs to the ATPase alpha/beta chains family. In terms of assembly, F-type ATPases have 2 components, CF(1) - the catalytic core - and CF(0) - the membrane proton channel. CF(1) has five subunits: alpha(3), beta(3), gamma(1), delta(1), epsilon(1). CF(0) has four main subunits: a(1), b(1), b'(1) and c(9-12).

Its subcellular location is the cell membrane. It catalyses the reaction ATP + H2O + 4 H(+)(in) = ADP + phosphate + 5 H(+)(out). Its function is as follows. Produces ATP from ADP in the presence of a proton gradient across the membrane. The catalytic sites are hosted primarily by the beta subunits. This is ATP synthase subunit beta from Roseiflexus castenholzii (strain DSM 13941 / HLO8).